Here is a 209-residue protein sequence, read N- to C-terminus: MKKQKVTSQKQKITYRVNEQIRVPEVRIIFQDGTQKVMQTAEARRMAEERNTDLIEVQPNAEPPVCKFDNLGKLLFKMAQRDKDLKKKQKTTTLKELRFHPNTDKHDFDFKTAHLEEFLRKGNRVRATIVFLGRSIIYKDKGLELAERLTERLSVVGNRDGDPKFEGKKLFVYFEPDKKKIDAYDRIRTKTGKLAPLPDEPEEDGENND.

The protein belongs to the IF-3 family. As to quaternary structure, monomer.

Its subcellular location is the cytoplasm. Its function is as follows. IF-3 binds to the 30S ribosomal subunit and shifts the equilibrium between 70S ribosomes and their 50S and 30S subunits in favor of the free subunits, thus enhancing the availability of 30S subunits on which protein synthesis initiation begins. The protein is Translation initiation factor IF-3 of Chlorobium phaeovibrioides (strain DSM 265 / 1930) (Prosthecochloris vibrioformis (strain DSM 265)).